We begin with the raw amino-acid sequence, 289 residues long: ATP synthase gamma chain (289 aa).

It belongs to the ATPase gamma chain family. In terms of assembly, F-type ATPases have 2 components, CF(1) - the catalytic core - and CF(0) - the membrane proton channel. CF(1) has five subunits: alpha(3), beta(3), gamma(1), delta(1), epsilon(1). CF(0) has three main subunits: a, b and c.

The protein resides in the cell inner membrane. Produces ATP from ADP in the presence of a proton gradient across the membrane. The gamma chain is believed to be important in regulating ATPase activity and the flow of protons through the CF(0) complex. The protein is ATP synthase gamma chain of Halorhodospira halophila (strain DSM 244 / SL1) (Ectothiorhodospira halophila (strain DSM 244 / SL1)).